The primary structure comprises 94 residues: Pyrimidine/purine nucleoside phosphorylase (94 aa).

The protein belongs to the nucleoside phosphorylase PpnP family.

The enzyme catalyses a purine D-ribonucleoside + phosphate = a purine nucleobase + alpha-D-ribose 1-phosphate. The catalysed reaction is adenosine + phosphate = alpha-D-ribose 1-phosphate + adenine. It carries out the reaction cytidine + phosphate = cytosine + alpha-D-ribose 1-phosphate. It catalyses the reaction guanosine + phosphate = alpha-D-ribose 1-phosphate + guanine. The enzyme catalyses inosine + phosphate = alpha-D-ribose 1-phosphate + hypoxanthine. The catalysed reaction is thymidine + phosphate = 2-deoxy-alpha-D-ribose 1-phosphate + thymine. It carries out the reaction uridine + phosphate = alpha-D-ribose 1-phosphate + uracil. It catalyses the reaction xanthosine + phosphate = alpha-D-ribose 1-phosphate + xanthine. In terms of biological role, catalyzes the phosphorolysis of diverse nucleosides, yielding D-ribose 1-phosphate and the respective free bases. Can use uridine, adenosine, guanosine, cytidine, thymidine, inosine and xanthosine as substrates. Also catalyzes the reverse reactions. The chain is Pyrimidine/purine nucleoside phosphorylase from Alcanivorax borkumensis (strain ATCC 700651 / DSM 11573 / NCIMB 13689 / SK2).